Reading from the N-terminus, the 505-residue chain is Beta-glucosidase 18 (505 aa).

An N-terminal signal peptide occupies residues 1-26 (MAGGSKTRIHASLVSTLLLLLPLASA). Q46 serves as a coordination point for a beta-D-glucoside. N55 is a glycosylation site (N-linked (GlcNAc...) asparagine). A beta-D-glucoside is bound by residues H148 and 193–194 (NE). E194 acts as the Proton donor in catalysis. Residues C213 and C220 are joined by a disulfide bond. Residue Y337 coordinates a beta-D-glucoside. Residues C345 and C350 are joined by a disulfide bond. A beta-D-glucoside-binding positions include E408, W457, 464–465 (EW), and F473. The Nucleophile role is filled by E408.

This sequence belongs to the glycosyl hydrolase 1 family. As to expression, expressed in roots, leaves, flowers and pollen.

It catalyses the reaction Hydrolysis of terminal, non-reducing beta-D-glucosyl residues with release of beta-D-glucose.. Hydrolyzes glycosides and monolignol glucosides. Can hydrolyze para-nitrophenyl beta-D-glucopyranoside (pNPGlc) in vitro. Hydrolyzes para-nitrophenyl beta-D-fucopyranoside, para-nitrophenyl beta-D-galactopyranoside and para-nitrophenyl beta-D-xylopyranoside in vitro. Hydrolyzes the monolignol glucosides coniferin and syringin with high catalytic efficiencies. The protein is Beta-glucosidase 18 of Oryza sativa subsp. japonica (Rice).